Reading from the N-terminus, the 192-residue chain is Protein MTH_857 (192 aa).

Residues 9-192 (DEGRTLVKIA…FQAQIFHEDG (184 aa)) form the AMMECR1 domain.

This chain is Protein MTH_857, found in Methanothermobacter thermautotrophicus (strain ATCC 29096 / DSM 1053 / JCM 10044 / NBRC 100330 / Delta H) (Methanobacterium thermoautotrophicum).